A 374-amino-acid polypeptide reads, in one-letter code: tRNA-specific 2-thiouridylase MnmA (374 aa).

ATP contacts are provided by residues 13-20 (GMSGGVDS) and Met39. Residues 99–101 (NPD) are interaction with target base in tRNA. The active-site Nucleophile is Cys104. A disulfide bridge links Cys104 with Cys201. Gly128 provides a ligand contact to ATP. An interaction with tRNA region spans residues 151 to 153 (KDQ). Catalysis depends on Cys201, which acts as the Cysteine persulfide intermediate. The tract at residues 313–314 (RY) is interaction with tRNA.

It belongs to the MnmA/TRMU family.

It localises to the cytoplasm. The catalysed reaction is S-sulfanyl-L-cysteinyl-[protein] + uridine(34) in tRNA + AH2 + ATP = 2-thiouridine(34) in tRNA + L-cysteinyl-[protein] + A + AMP + diphosphate + H(+). In terms of biological role, catalyzes the 2-thiolation of uridine at the wobble position (U34) of tRNA, leading to the formation of s(2)U34. In Streptococcus equi subsp. equi (strain 4047), this protein is tRNA-specific 2-thiouridylase MnmA.